Consider the following 117-residue polypeptide: Prefoldin subunit beta (117 aa).

It belongs to the prefoldin subunit beta family. In terms of assembly, heterohexamer of two alpha and four beta subunits.

It is found in the cytoplasm. Its function is as follows. Molecular chaperone capable of stabilizing a range of proteins. Seems to fulfill an ATP-independent, HSP70-like function in archaeal de novo protein folding. The sequence is that of Prefoldin subunit beta from Thermococcus gammatolerans (strain DSM 15229 / JCM 11827 / EJ3).